Here is a 289-residue protein sequence, read N- to C-terminus: DNA repair protein rad14 (289 aa).

Cys116, Cys119, Cys137, and Cys140 together coordinate Zn(2+). The segment at 116 to 140 is a zinc-finger region; it reads CFECDSIELDTKYFDIFHCRVCHTC.

This sequence belongs to the XPA family. Interacts with hrq1.

It localises to the nucleus. Its function is as follows. Involved in nucleotide excision repair (NER). Functional in repair of ultraviolet radiation induced damages and in mitotic mutation avoidance. Binds damaged DNA. Binds specifically to base-base mismatches or small insertion/deletion loops with unpaired nucleotides. Maintains GT repeat stability. Functions as a part of the short-patch excision repair system. The sequence is that of DNA repair protein rad14 from Schizosaccharomyces pombe (strain 972 / ATCC 24843) (Fission yeast).